Consider the following 282-residue polypeptide: DegV domain-containing protein spr1415 (282 aa).

Positions 3-280 constitute a DegV domain; it reads LAVFTDSSAY…AGSIALGYIP (278 aa). Residues Thr61 and Ser94 each coordinate hexadecanoate.

Its function is as follows. May bind long-chain fatty acids, such as palmitate, and may play a role in lipid transport or fatty acid metabolism. This is DegV domain-containing protein spr1415 from Streptococcus pneumoniae (strain ATCC BAA-255 / R6).